Reading from the N-terminus, the 86-residue chain is Large ribosomal subunit protein bL31 (86 aa).

Zn(2+)-binding residues include Cys16, Cys18, Cys38, and Cys41.

The protein belongs to the bacterial ribosomal protein bL31 family. Type A subfamily. As to quaternary structure, part of the 50S ribosomal subunit. Requires Zn(2+) as cofactor.

In terms of biological role, binds the 23S rRNA. The sequence is that of Large ribosomal subunit protein bL31 from Acidothermus cellulolyticus (strain ATCC 43068 / DSM 8971 / 11B).